The primary structure comprises 187 residues: Putative carbonic anhydrase YtiB (187 aa).

The Zn(2+) site is built by C38, D40, H96, and C99.

This sequence belongs to the beta-class carbonic anhydrase family. It depends on Zn(2+) as a cofactor.

The enzyme catalyses hydrogencarbonate + H(+) = CO2 + H2O. Reversible hydration of carbon dioxide. The protein is Putative carbonic anhydrase YtiB (ytiB) of Bacillus subtilis (strain 168).